A 285-amino-acid polypeptide reads, in one-letter code: RNase adapter protein RapZ (285 aa).

8 to 15 contributes to the ATP binding site; the sequence is GRSGSGKS. Residue 56–59 participates in GTP binding; that stretch reads DVRN. The segment at 266-285 is RNA-binding; it reads RSRGKNVQSRHRTLEKRKPS.

This sequence belongs to the RapZ-like family. RapZ subfamily. Homotrimer.

Modulates the synthesis of GlmS, by affecting the processing and stability of the regulatory small RNA GlmZ. When glucosamine-6-phosphate (GlcN6P) concentrations are high in the cell, RapZ binds GlmZ and targets it to cleavage by RNase E. Consequently, GlmZ is inactivated and unable to activate GlmS synthesis. Under low GlcN6P concentrations, RapZ is sequestered and inactivated by an other regulatory small RNA, GlmY, preventing GlmZ degradation and leading to synthesis of GlmS. The chain is RNase adapter protein RapZ from Pectobacterium atrosepticum (strain SCRI 1043 / ATCC BAA-672) (Erwinia carotovora subsp. atroseptica).